The primary structure comprises 490 residues: MALNSGSPPGIGPCYENHGYQSEHICPPRPPVAPNGYNLYPAQYYPSPVPQYAPRITTQASTSVIHTHPKSSGALCTSKSKKSLCLALALGTVLTGAAVAAVLLWRFWDSNCSTSEMECGSSGTCISSSLWCDGVAHCPNGEDENRCVRLYGQSFILQVYSSQRKAWYPVCQDDWSESYGRAACKDMGYKNNFYSSQGIPDQSGATSFMKLNVSSGNVDLYKKLYHSDSCSSRMVVSLRCIECGVRSVKRQSRIVGGLNASPGDWPWQVSLHVQGVHVCGGSIITPEWIVTAAHCVEEPLSSPRYWTAFAGILRQSLMFYGSRHQVEKVISHPNYDSKTKNNDIALMKLQTPLAFNDLVKPVCLPNPGMMLDLDQECWISGWGATYEKGKTSDVLNAAMVPLIEPSKCNSKYIYNNLITPAMICAGFLQGSVDSCQGDSGGPLVTLKNGIWWLIGDTSWGSGCAKALRPGVYGNVTVFTDWIYQQMRANS.

Topologically, residues Met1–Ser83 are cytoplasmic. Residues Leu84–Leu104 traverse the membrane as a helical; Signal-anchor for type II membrane protein segment. The Extracellular segment spans residues Trp105–Ser490. A glycan (N-linked (GlcNAc...) asparagine) is linked at Asn111. The LDL-receptor class A domain maps to Asn111–Arg149. 9 disulfides stabilise this stretch: Cys112-Cys125, Cys119-Cys138, Cys132-Cys147, Cys171-Cys230, Cys184-Cys240, Cys243-Cys363, Cys279-Cys295, Cys408-Cys424, and Cys435-Cys463. Residues Asp133, Val135, Asp143, and Glu144 each coordinate Ca(2+). In terms of domain architecture, SRCR spans Leu150–Glu242. Asn212 carries N-linked (GlcNAc...) asparagine glycosylation. A Peptidase S1 domain is found at Ile254–Arg487. Catalysis depends on charge relay system residues His294 and Asp343. Ser439 acts as the Charge relay system in catalysis. N-linked (GlcNAc...) asparagine glycosylation is present at Asn474.

The protein belongs to the peptidase S1 family. As to quaternary structure, the catalytically active form interacts with ACE2. In terms of processing, proteolytically processed; by an autocatalytic mechanism. Autocleavage induces active conformation. In terms of tissue distribution, larynx, trachea and bronchi, lung, prostate and kidney.

The protein localises to the cell membrane. It is found in the secreted. The enzyme catalyses The enzyme cleaves angiotensin-converting enzyme 2 (EC 3.4.17.23) and cleaves influenzea A and B virus and coronavirus spike glycoproteins at arginine residues.. Functionally, plasma membrane-anchored serine protease that cleaves at arginine residues. Participates in proteolytic cascades of relevance for the normal physiologic function of the prostate. Androgen-induced TMPRSS2 activates several substrates that include pro-hepatocyte growth factor/HGF, the protease activated receptor-2/F2RL1 or matriptase/ST14 leading to extracellular matrix disruption. In addition, activates trigeminal neurons and contribute to both spontaneous pain and mechanical allodynia. (Microbial infection) Essential for spread and pathogenesis of influenza A virus (strains H1N1, H3N2 and H7N9) and is involved in proteolytic cleavage and activation of hemagglutinin (HA) protein which is essential for viral infectivity. This chain is Transmembrane protease serine 2 (Tmprss2), found in Mus musculus (Mouse).